Consider the following 522-residue polypeptide: Putative aldehyde dehydrogenase-like protein C21C3 (522 aa).

The active-site Proton acceptor is the Glu239. Cys273 (nucleophile) is an active-site residue.

Belongs to the aldehyde dehydrogenase family.

The protein localises to the cytoplasm. It localises to the nucleus. This chain is Putative aldehyde dehydrogenase-like protein C21C3, found in Schizosaccharomyces pombe (strain 972 / ATCC 24843) (Fission yeast).